A 119-amino-acid polypeptide reads, in one-letter code: MRHYEIILLIHPDCSEKLPIMIEKFKKLVIGYKGRIHRLEDWGRRQLAYSINKLHKAHYFLMNIEVPSNCIQDLSNTFRYDDLVIRNIIMHVKKSVTEISPMLKSKEDKLDKKDRVVVS.

This sequence belongs to the bacterial ribosomal protein bS6 family.

Functionally, binds together with bS18 to 16S ribosomal RNA. The chain is Small ribosomal subunit protein bS6 from Buchnera aphidicola subsp. Baizongia pistaciae (strain Bp).